The following is a 621-amino-acid chain: F-box/LRR-repeat protein 4 (621 aa).

Residue arginine 28 is modified to Asymmetric dimethylarginine. The region spanning 277–332 (NGYFDKLPYELIQLILNHLSLPDLCRLAQTCRLLHQHCCDPLQYIHLNLQPYWARL) is the F-box domain. 9 LRR repeats span residues 376 to 397 (ELVR…EVIS), 402 to 421 (NLQD…AFGH), 427 to 448 (SLKR…SILN), 452 to 474 (ELQH…ASMI), 480 to 501 (NLRT…AELA), 504 to 524 (CVLL…STGC), 532 to 558 (LPNL…ASNC), 559 to 583 (TRLQ…LLES), and 584 to 609 (CKDL…LNAS).

As to quaternary structure, part of a SCF (SKP1-CUL1-F-box) protein ligase complex. Interacts with FAF2 and VCP. Interacts with PPTC7; this interaction promotes destruction of BNIP3 and NIX and mitophagy suppression.

Its subcellular location is the cytoplasm. The protein localises to the nucleus. It is found in the mitochondrion outer membrane. Its function is as follows. Substrate-recognition component of the mitochondria-localized SCF-FBXL4 ubiquitin E3 ligase complex that plays a role in the restriction of mitophagy by controlling the degradation of BNIP3 and NIX mitophagy receptors. Also rescues mitochondrial injury through reverting hyperactivation of DRP1-mediated mitochondrial fission. The protein is F-box/LRR-repeat protein 4 (Fbxl4) of Mus musculus (Mouse).